The sequence spans 344 residues: Nuclear distribution protein nudE homolog 1 (344 aa).

The interval 1 to 93 (MEDSGKTFGS…MQHSEGYRQI (93 aa)) is self-association. A coiled-coil region spans residues 18–188 (WRDLAMTYKQ…ELAVQQKQDK (171 aa)). Over residues 30–47 (ENTQEELREFQEGSREYE) the composition is skewed to basic and acidic residues. The segment at 30-65 (ENTQEELREFQEGSREYEAELETQLQQAETRNRDLL) is disordered. The segment at 88–156 (EGYRQISALE…ERNAFLESEL (69 aa)) is interaction with PAFAH1B1. The interaction with CENPF stretch occupies residues 167 to 290 (QRLKDEARDL…QSPSRKSGPA (124 aa)). The disordered stretch occupies residues 181–243 (AVQQKQDKPR…CGLGSPSSGT (63 aa)). The segment covering 208–230 (ATGSAPSTPITHQGSSSGLNTPE) has biased composition (polar residues). A Phosphoserine modification is found at S211. T215, T228, T243, and T246 each carry phosphothreonine. C274 is lipidated: S-palmitoyl cysteine; by ZDHHC2, ZDHHC3 and ZDHHC7. A disordered region spans residues 279–337 (YDQSPSRKSGPALGRGTKNRDGIDRRPGSTAVGDKGSGKRLEFAKPSSQLSSPALPSTQ). Position 282 is a phosphoserine (S282). The segment covering 296–305 (KNRDGIDRRP) has biased composition (basic and acidic residues). Residues 324-335 (PSSQLSSPALPS) show a composition bias toward low complexity.

It belongs to the nudE family. Homodimer. Interacts with CNTRL, LIS1, dynein, SLMAP and TCP1. Interacts with CENPF, dynactin, tubulin gamma, PAFAH1B1, PCM1 and PCNT. Interacts with ZNF365. Interacts with GTP-bound RAB9A and RAB9B; the interaction leads to RAB9-dynein motor tethering. Interacts (via C-terminus) with MCRS1 (via C-terminus); phosphorylation of NDE1 inhibits the interaction. Phosphorylated in mitosis. Phosphorylation at Thr-246 is essential for the G2/M transition. As to expression, expressed in brain, heart, kidney, liver, lung, skeletal muscle, spleen and testis.

The protein resides in the cytoplasm. The protein localises to the cytoskeleton. It is found in the microtubule organizing center. It localises to the centrosome. Its subcellular location is the spindle. The protein resides in the chromosome. The protein localises to the centromere. It is found in the kinetochore. It localises to the cleavage furrow. Its subcellular location is the cytoplasmic vesicle membrane. Functionally, required for centrosome duplication and formation and function of the mitotic spindle. Essential for the development of the cerebral cortex. May regulate the production of neurons by controlling the orientation of the mitotic spindle during division of cortical neuronal progenitors of the proliferative ventricular zone of the brain. Orientation of the division plane perpendicular to the layers of the cortex gives rise to two proliferative neuronal progenitors whereas parallel orientation of the division plane yields one proliferative neuronal progenitor and a postmitotic neuron. A premature shift towards a neuronal fate within the progenitor population may result in an overall reduction in the final number of neurons and an increase in the number of neurons in the deeper layers of the cortex. Acts as a RAB9A/B effector that tethers RAB9-associated late endosomes to the dynein motor for their retrograde transport to the trans-Golgi network. In Rattus norvegicus (Rat), this protein is Nuclear distribution protein nudE homolog 1.